The chain runs to 287 residues: Ventral anterior homeobox 1b (287 aa).

Basic and acidic residues predominate over residues 1-33; the sequence is MFEKTRDMDVRCNIEENGRISKPKDNKEIRESQ. Residues 1–55 form a disordered region; sequence MFEKTRDMDVRCNIEENGRISKPKDNKEIRESQSKMPSTYPAPGSSEGCAKNKSS. The homeobox DNA-binding region spans 89–148; that stretch reads PKRTRTSFTAEQLYRLEMEFQRCQYVVGRERTELARQLNLSETQVKVWFQNRRTKQKKDQ.

Belongs to the EMX homeobox family.

Its subcellular location is the nucleus. Its function is as follows. Involved in ventral eye development. The sequence is that of Ventral anterior homeobox 1b (vax1-b) from Xenopus laevis (African clawed frog).